Here is a 237-residue protein sequence, read N- to C-terminus: Small ribosomal subunit protein uS2m (237 aa).

It belongs to the universal ribosomal protein uS2 family.

It is found in the mitochondrion. The protein is Small ribosomal subunit protein uS2m (RPS2) of Marchantia polymorpha (Common liverwort).